Consider the following 153-residue polypeptide: 3-hydroxyacyl-[acyl-carrier-protein] dehydratase FabZ (153 aa).

The active site involves histidine 57.

Belongs to the thioester dehydratase family. FabZ subfamily.

The protein resides in the cytoplasm. The enzyme catalyses a (3R)-hydroxyacyl-[ACP] = a (2E)-enoyl-[ACP] + H2O. Its function is as follows. Involved in unsaturated fatty acids biosynthesis. Catalyzes the dehydration of short chain beta-hydroxyacyl-ACPs and long chain saturated and unsaturated beta-hydroxyacyl-ACPs. This chain is 3-hydroxyacyl-[acyl-carrier-protein] dehydratase FabZ, found in Xanthomonas campestris pv. campestris (strain 8004).